The primary structure comprises 216 residues: Cobalt-zinc-cadmium resistance protein CzcN (216 aa).

Helical transmembrane passes span 27 to 47 (IGVW…GHSR), 50 to 70 (GTWV…LATV), and 116 to 136 (ESLA…PAVI).

To A.xylosoxydans NccN.

Its subcellular location is the cell inner membrane. In terms of biological role, component of the CZC cation-efflux system that confers resistance to cobalt, zinc and cadmium. The chain is Cobalt-zinc-cadmium resistance protein CzcN (czcN) from Cupriavidus metallidurans (strain ATCC 43123 / DSM 2839 / NBRC 102507 / CH34) (Ralstonia metallidurans).